The primary structure comprises 99 residues: Monothiol glutaredoxin-S11 (99 aa).

The 99-residue stretch at 1 to 99 (MDKVMRMSSE…LVPLVKPYLC (99 aa)) folds into the Glutaredoxin domain. Position 21 (C21) interacts with [2Fe-2S] cluster.

Belongs to the glutaredoxin family. CC-type subfamily.

The protein localises to the cytoplasm. In terms of biological role, may only reduce GSH-thiol disulfides, but not protein disulfides. This is Monothiol glutaredoxin-S11 (GRXS11) from Arabidopsis thaliana (Mouse-ear cress).